The chain runs to 756 residues: Subtilisin-like protease SBT3.9 (756 aa).

The N-terminal stretch at 1 to 25 (MSKTILFLALFLSIVLNVQISFVVA) is a signal peptide. A propeptide spans 26 to 108 (ESKVYVVYLG…VIPNTLYEMT (83 aa)) (activation peptide). The 78-residue stretch at 29–106 (VYVVYLGEKE…VQVIPNTLYE (78 aa)) folds into the Inhibitor I9 domain. A Peptidase S8 domain is found at 112–603 (TWDYLGVSPG…GGLINPEKAV (492 aa)). Aspartate 142 functions as the Charge relay system in the catalytic mechanism. Asparagine 175 and asparagine 202 each carry an N-linked (GlcNAc...) asparagine glycan. Histidine 218 serves as the catalytic Charge relay system. Asparagine 233, asparagine 357, asparagine 395, and asparagine 519 each carry an N-linked (GlcNAc...) asparagine glycan. One can recognise a PA domain in the interval 386-460 (DCEKLSANPN…ELGTDILFYI (75 aa)). The Charge relay system role is filled by serine 534.

Belongs to the peptidase S8 family.

The protein localises to the secreted. This chain is Subtilisin-like protease SBT3.9, found in Arabidopsis thaliana (Mouse-ear cress).